A 269-amino-acid chain; its full sequence is S-adenosylmethionine decarboxylase proenzyme (269 aa).

Serine 118 functions as the Schiff-base intermediate with substrate; via pyruvic acid in the catalytic mechanism. Residue serine 118 is modified to Pyruvic acid (Ser); by autocatalysis. The active-site Proton acceptor; for processing activity is histidine 123. Cysteine 146 (proton donor; for catalytic activity) is an active-site residue.

The protein belongs to the prokaryotic AdoMetDC family. Type 2 subfamily. As to quaternary structure, heterooctamer of four alpha and four beta chains arranged as a tetramer of alpha/beta heterodimers. The cofactor is pyruvate. Is synthesized initially as an inactive proenzyme. Formation of the active enzyme involves a self-maturation process in which the active site pyruvoyl group is generated from an internal serine residue via an autocatalytic post-translational modification. Two non-identical subunits are generated from the proenzyme in this reaction, and the pyruvate is formed at the N-terminus of the alpha chain, which is derived from the carboxyl end of the proenzyme. The post-translation cleavage follows an unusual pathway, termed non-hydrolytic serinolysis, in which the side chain hydroxyl group of the serine supplies its oxygen atom to form the C-terminus of the beta chain, while the remainder of the serine residue undergoes an oxidative deamination to produce ammonia and the pyruvoyl group blocking the N-terminus of the alpha chain.

It carries out the reaction S-adenosyl-L-methionine + H(+) = S-adenosyl 3-(methylsulfanyl)propylamine + CO2. The protein operates within amine and polyamine biosynthesis; S-adenosylmethioninamine biosynthesis; S-adenosylmethioninamine from S-adenosyl-L-methionine: step 1/1. Catalyzes the decarboxylation of S-adenosylmethionine to S-adenosylmethioninamine (dcAdoMet), the propylamine donor required for the synthesis of the polyamines spermine and spermidine from the diamine putrescine. The chain is S-adenosylmethionine decarboxylase proenzyme from Brevibacillus brevis (strain 47 / JCM 6285 / NBRC 100599).